The following is a 523-amino-acid chain: Frizzled-4 (523 aa).

The N-terminal stretch at 1-22 is a signal peptide; that stretch reads MGARSLTLLYLLCCLVVGLIAG. At 23 to 198 the chain is on the extracellular side; sequence FGEEEERSCD…KCGYDSGLYN (176 aa). The 122-residue stretch at 26 to 147 folds into the FZ domain; the sequence is EEERSCDPIR…NDHNHMCMEG (122 aa). 8 cysteine pairs are disulfide-bonded: C31/C92, C39/C85, C76/C114, C103/C144, C107/C131, C167/C186, C190/C268, and C288/C363. The N-linked (GlcNAc...) asparagine glycan is linked to N45. N-linked (GlcNAc...) asparagine glycosylation occurs at N130. Residues 199-229 form a helical membrane-spanning segment; sequence RLSKEFTDIWMAVWASLCFISTAFTVLTFLI. Over 230–235 the chain is Cytoplasmic; that stretch reads DSSRFC. The chain crosses the membrane as a helical span at residues 236-261; the sequence is YPERPIIFLSMCYNIYSIAYIVRLTV. Residues 262-285 are Extracellular-facing; it reads GRERISCDFEEAAEPVLIQEGLKN. Residues 286–319 form a helical membrane-spanning segment; sequence TGCAIIFLLMYFFGMASSIWWVILTLTWFLAAGL. Residues 320–322 are Cytoplasmic-facing; the sequence is KWG. A helical membrane pass occupies residues 323-351; it reads HEAIEMHSSYFHIAAWAIPAVKTIVILIM. Residues 352-369 lie on the Extracellular side of the membrane; it reads RLVDADELTGLCYVGNQN. The helical transmembrane segment at 370–396 threads the bilayer; that stretch reads IDALTGFVVAPLFTYLVIGTLFIAAGL. Residues 397–417 lie on the Cytoplasmic side of the membrane; it reads VALFKIRSNLQKDGTKTDKLE. The helical transmembrane segment at 418–443 threads the bilayer; it reads RLMVKIGVFSVLYTVPATCVIACYFY. The Extracellular segment spans residues 444 to 459; that stretch reads EVSNWNVFRYTADDSN. Residues 460–481 form a helical membrane-spanning segment; the sequence is MAVEMLNIFMSLLVGITSGMWI. At 482–523 the chain is on the cytoplasmic side; sequence WSAKTLHTWQKCTNRLVNSGKVKRKKRVDGWVKPGKGNETVV. The Lys-Thr-X-X-X-Trp motif, mediates interaction with the PDZ domain of Dvl family members motif lies at 485-490; it reads KTLHTW. The PDZ-binding motif lies at 521–523; the sequence is TVV.

The protein belongs to the G-protein coupled receptor Fz/Smo family. Interacts (via FZ domain) with tsku; tsku competes with wnt2b for binding to fzd4, inhibiting Wnt signaling and repressing peripheral eye development.

Its subcellular location is the cell membrane. Functionally, receptor for Wnt proteins. Most frizzled receptors are coupled to the beta-catenin canonical signaling pathway, which leads to the activation of disheveled proteins, inhibition of GSK-3 kinase, nuclear accumulation of beta-catenin and activation of Wnt target genes. A second signaling pathway involving PKC and calcium fluxes has been seen for some family members, but it is not yet clear if it represents a distinct pathway or if it can be integrated in the canonical pathway, as PKC seems to be required for Wnt-mediated inactivation of GSK-3 kinase. Both pathways seem to involve interactions with G-proteins. May be involved in transduction and intercellular transmission of polarity information during tissue morphogenesis and/or in differentiated tissues. Activated by Wnt5A. The sequence is that of Frizzled-4 (fzd4) from Xenopus laevis (African clawed frog).